The following is a 493-amino-acid chain: MAAATGPSFWLGNETLKVPLALFALNRQRLCERLRKNPAVQAGSIVVLQGGEETQRYCTDTGVLFRQESFFHWAFGVTEPGCYGVIDVDTGKSTLFVPRLPASHATWMGKIHSKEHFKEKYAVDDVQYVDEIASVLTSQKPSVLLTLRGVNTDSGSVCREASFDGISKFEVNNTILHPEIVECRVFKTDMELEVLRYTNKISSEAHREVMKAVKVGMKEYELESLFEHYCYSRGGMRHSSYTCICGSGENSAVLHYGHAGAPNDRTIQNGDMCLFDMGGEYYCFASDITCSFPANGKFTADQKAVYEAVLRSSRAVMGAMKPGVWWPDMHRLADRIHLEELAHMGILSGSVDAMVQAHLGAVFMPHGLGHFLGIDVHDVGGYPEGVERIDEPGLRSLRTARHLQPGMVLTVEPGIYFIDHLLDEALADPARASFLNREVLQRFRGFGGVRIEEDVVVTDSGIELLTCVPRTVEEIEACMAGCDKAFTPFSGPK.

An N-acetylalanine modification is found at Ala2. At Ser167 the chain carries Phosphoserine. His255 is a binding site for a dipeptide. Mn(2+)-binding residues include Asp276, Asp287, and His370. Asp287 provides a ligand contact to a dipeptide. His377 and Arg398 together coordinate a dipeptide. Residues Glu412 and Glu452 each coordinate Mn(2+).

This sequence belongs to the peptidase M24B family. Eukaryotic-type prolidase subfamily. In terms of assembly, homodimer. Mn(2+) serves as cofactor.

The enzyme catalyses Xaa-L-Pro dipeptide + H2O = an L-alpha-amino acid + L-proline. With respect to regulation, specifically inhibited by the pseudodipeptide CQ31. Inhibition by CQ31 indirectly activates the CARD8 inflammasome: dipeptide accumulation following PEPD inactivation weaky inhibit dipeptidyl peptidases DDP8 and DPP9, relieving DPP8- and/or DPP9-mediated inhibition of CARD8. Its function is as follows. Dipeptidase that catalyzes the hydrolysis of dipeptides with a prolyl (Xaa-Pro) or hydroxyprolyl residue in the C-terminal position. The preferred dipeptide substrate is Gly-Pro, but other Xaa-Pro dipeptides, such as Ala-Pro, Met-Pro, Phe-Pro, Val-Pro and Leu-Pro, can be cleaved. Plays an important role in collagen metabolism because the high level of iminoacids in collagen. This is Xaa-Pro dipeptidase from Homo sapiens (Human).